The primary structure comprises 72 residues: MIIPWQGLAPDTLDNLIESFVLREGTDYGEHERSLEQKVADVKRQLQSGEAVLVWSELHETVNIMPKKQFRE.

It belongs to the UPF0270 family.

In Salmonella choleraesuis (strain SC-B67), this protein is UPF0270 protein YheU.